Here is a 224-residue protein sequence, read N- to C-terminus: UPF0758 protein PD_0117 (224 aa).

The MPN domain maps to 102-224 (SIHDPISAGR…PVSFAEHGWL (123 aa)). Zn(2+) contacts are provided by histidine 173, histidine 175, and aspartate 186. Positions 173–186 (HNHPSGNREPSPAD) match the JAMM motif motif.

Belongs to the UPF0758 family.

The protein is UPF0758 protein PD_0117 of Xylella fastidiosa (strain Temecula1 / ATCC 700964).